The chain runs to 184 residues: uncharacterized protein (184 aa).

A disordered region spans residues 146–177 (HPKTSLAQQPNAKATQPPLSKETLNTAKETDP). Polar residues predominate over residues 150-172 (SLAQQPNAKATQPPLSKETLNTA).

This is an uncharacterized protein from Picosynechococcus sp. (strain ATCC 27264 / PCC 7002 / PR-6) (Agmenellum quadruplicatum).